The following is a 302-amino-acid chain: Glycine--tRNA ligase alpha subunit (302 aa).

This sequence belongs to the class-II aminoacyl-tRNA synthetase family. In terms of assembly, tetramer of two alpha and two beta subunits.

The protein resides in the cytoplasm. The enzyme catalyses tRNA(Gly) + glycine + ATP = glycyl-tRNA(Gly) + AMP + diphosphate. In Haemophilus influenzae (strain ATCC 51907 / DSM 11121 / KW20 / Rd), this protein is Glycine--tRNA ligase alpha subunit (glyQ).